Here is a 255-residue protein sequence, read N- to C-terminus: Thiazole synthase (255 aa).

Catalysis depends on Lys97, which acts as the Schiff-base intermediate with DXP. 1-deoxy-D-xylulose 5-phosphate-binding positions include Gly158, 184–185 (AG), and 206–207 (NT).

It belongs to the ThiG family. Homotetramer. Forms heterodimers with either ThiH or ThiS.

Its subcellular location is the cytoplasm. It catalyses the reaction [ThiS sulfur-carrier protein]-C-terminal-Gly-aminoethanethioate + 2-iminoacetate + 1-deoxy-D-xylulose 5-phosphate = [ThiS sulfur-carrier protein]-C-terminal Gly-Gly + 2-[(2R,5Z)-2-carboxy-4-methylthiazol-5(2H)-ylidene]ethyl phosphate + 2 H2O + H(+). The protein operates within cofactor biosynthesis; thiamine diphosphate biosynthesis. Catalyzes the rearrangement of 1-deoxy-D-xylulose 5-phosphate (DXP) to produce the thiazole phosphate moiety of thiamine. Sulfur is provided by the thiocarboxylate moiety of the carrier protein ThiS. In vitro, sulfur can be provided by H(2)S. In Moorella thermoacetica (strain ATCC 39073 / JCM 9320), this protein is Thiazole synthase.